Here is a 394-residue protein sequence, read N- to C-terminus: Subtilisin-like protease CPC735_005570 (394 aa).

An N-terminal signal peptide occupies residues 1–21; it reads MRAIISVALFLSLSLLSAVNA. Positions 22-114 are excised as a propeptide; sequence AEILSAGDTD…IEHDRIANAR (93 aa). The region spanning 37-110 is the Inhibitor I9 domain; sequence SYIVVMRDGL…AVKYIEHDRI (74 aa). One can recognise a Peptidase S8 domain in the interval 123 to 394; that stretch reads GWNLARISHK…RLLLYNGSGR (272 aa). Catalysis depends on charge relay system residues Asp-155 and His-186. N-linked (GlcNAc...) asparagine glycans are attached at residues Asn-216 and Asn-247. Catalysis depends on Ser-340, which acts as the Charge relay system. Asn-382 and Asn-390 each carry an N-linked (GlcNAc...) asparagine glycan.

This sequence belongs to the peptidase S8 family.

It is found in the secreted. Functionally, secreted subtilisin-like serine protease with keratinolytic activity that contributes to pathogenicity. This is Subtilisin-like protease CPC735_005570 from Coccidioides posadasii (strain C735) (Valley fever fungus).